A 147-amino-acid polypeptide reads, in one-letter code: Large ribosomal subunit protein uL11 (147 aa).

Belongs to the universal ribosomal protein uL11 family. In terms of assembly, part of the ribosomal stalk of the 50S ribosomal subunit. Interacts with L10 and the large rRNA to form the base of the stalk. L10 forms an elongated spine to which L12 dimers bind in a sequential fashion forming a multimeric L10(L12)X complex. In terms of processing, one or more lysine residues are methylated.

Forms part of the ribosomal stalk which helps the ribosome interact with GTP-bound translation factors. The protein is Large ribosomal subunit protein uL11 of Metamycoplasma arthritidis (strain 158L3-1) (Mycoplasma arthritidis).